The chain runs to 263 residues: Imidazole glycerol phosphate synthase subunit HisF (263 aa).

Catalysis depends on residues D22 and D141.

It belongs to the HisA/HisF family. In terms of assembly, heterodimer of HisH and HisF.

The protein localises to the cytoplasm. It carries out the reaction 5-[(5-phospho-1-deoxy-D-ribulos-1-ylimino)methylamino]-1-(5-phospho-beta-D-ribosyl)imidazole-4-carboxamide + L-glutamine = D-erythro-1-(imidazol-4-yl)glycerol 3-phosphate + 5-amino-1-(5-phospho-beta-D-ribosyl)imidazole-4-carboxamide + L-glutamate + H(+). It functions in the pathway amino-acid biosynthesis; L-histidine biosynthesis; L-histidine from 5-phospho-alpha-D-ribose 1-diphosphate: step 5/9. In terms of biological role, IGPS catalyzes the conversion of PRFAR and glutamine to IGP, AICAR and glutamate. The HisF subunit catalyzes the cyclization activity that produces IGP and AICAR from PRFAR using the ammonia provided by the HisH subunit. This chain is Imidazole glycerol phosphate synthase subunit HisF, found in Clavibacter michiganensis subsp. michiganensis (strain NCPPB 382).